An 861-amino-acid polypeptide reads, in one-letter code: Nuclear cap-binding protein complex subunit 1 (861 aa).

Residues 22 to 30 (RMPKRQRIP) carry the Nuclear localization signal motif. The MIF4G domain occupies 36 to 264 (CKEMMPDIRT…LVRVVLPNVK (229 aa)).

This sequence belongs to the NCBP1 family. In terms of assembly, component of the nuclear cap-binding complex (CBC), a heterodimer composed of STO1/CBC1 and CBC2 that interacts with capped RNAs. The complex interacts strongly with the importin subunit alpha SRP1. The SRP1-CBC trimer also binds to capped RNAs, but formation of the importin alpha/beta heterodimer upon binding of KAP95 to SRP1 in the cytoplasm causes dissociation of CBC from the RNA. The CBC complex is part of the commitment complex 1 (CC1), binding to the cap of pre-mRNA and interacting with U1 snRNP subunits MUD2 and SNU56. The CBC complex is part of the NRD1 complex, composed of CBC2, NAB1, NRD1, SEN1 and STO1/CBC2. The CBC complex also interacts with NPL3 and eIF4G (TIF4631 and TIF4632).

It is found in the nucleus. It localises to the cytoplasm. Its subcellular location is the perinuclear region. In terms of biological role, component of the CBC complex, which binds co-transcriptionally to the 5'-cap of pre-mRNAs and is involved in maturation, export and degradation of nuclear mRNAs. The CBC complex is required for efficient pre-mRNA splicing through efficient commitment complex and spliceosome formation. Together with NPL3, the CBC complex is required for export of mRNAs out of the nucleus. The CBC complex is also involved in nuclear mRNA degradation, probably by directing the mRNAs to the sites of degradation. Affects replication of the positive-strand RNA virus BMV. This chain is Nuclear cap-binding protein complex subunit 1 (STO1), found in Saccharomyces cerevisiae (strain ATCC 204508 / S288c) (Baker's yeast).